A 599-amino-acid polypeptide reads, in one-letter code: Laccase-2 (599 aa).

A signal peptide spans 1-19; sequence MARSTTSLFALSLVASAFA. Plastocyanin-like domains are found at residues 21 to 145 and 157 to 307; these read VVDY…IVIY and VDDE…LVYE. Residues H82, H84, H127, and H129 each contribute to the Cu cation site. The cysteines at positions 103 and 588 are disulfide-linked. N207, N208, N231, N397, and N443 each carry an N-linked (GlcNAc...) asparagine glycan. The 118-residue stretch at 450 to 567 folds into the Plastocyanin-like 3 domain; it reads DVPTLLKILT…EGFAMVFAEA (118 aa). Residues H497, H500, H502, H549, C550, H551, and H555 each contribute to the Cu cation site.

The protein belongs to the multicopper oxidase family. Homodimer. The cofactor is Cu cation. As to expression, in mycelia, at a lower level than LCC4.

It localises to the secreted. It carries out the reaction 4 hydroquinone + O2 = 4 benzosemiquinone + 2 H2O. Its function is as follows. Lignin degradation and detoxification of lignin-derived products. This chain is Laccase-2 (LCC2), found in Thanatephorus cucumeris (Black scurf of potato).